The following is a 190-amino-acid chain: Protein FAM210B, mitochondrial (190 aa).

Residues 1 to 58 (MAGLLTLLGPAGRVSTRLRPLAPWLLGTATSCAPPLWALALSHPVPDARLLRTARGDC) constitute a mitochondrion transit peptide. Residues 56-66 (GDCLSRQEPNR) show a composition bias toward basic and acidic residues. The segment at 56–81 (GDCLSRQEPNRTPEPGGSVTGTEKKL) is disordered. The DUF1279 domain occupies 78–189 (EKKLSRTQQL…VGLFKPPATK (112 aa)). A run of 2 helical transmembrane segments spans residues 97–117 (VGVS…YTVV) and 148–168 (FVVA…ITLV).

The protein belongs to the FAM210 family. In terms of tissue distribution, expressed in late erythroblast differentiation stages.

It is found in the mitochondrion. Its subcellular location is the mitochondrion outer membrane. Its function is as follows. Plays a role in erythroid differentiation. Involved in cell proliferation and tumor cell growth suppression. Involved in the metabolic reprogramming of cancer cells in a PDK4-dependent manner. In Mus musculus (Mouse), this protein is Protein FAM210B, mitochondrial.